The following is a 286-amino-acid chain: Pantothenate synthetase (286 aa).

Position 30 to 37 (30 to 37 (MGNLHAGH)) interacts with ATP. His-37 serves as the catalytic Proton donor. Position 61 (Gln-61) interacts with (R)-pantoate. Gln-61 provides a ligand contact to beta-alanine. 149 to 152 (GEKD) lines the ATP pocket. Gln-155 contributes to the (R)-pantoate binding site. ATP-binding positions include Val-178 and 186-189 (MSSR).

The protein belongs to the pantothenate synthetase family. Homodimer.

Its subcellular location is the cytoplasm. The enzyme catalyses (R)-pantoate + beta-alanine + ATP = (R)-pantothenate + AMP + diphosphate + H(+). Its pathway is cofactor biosynthesis; (R)-pantothenate biosynthesis; (R)-pantothenate from (R)-pantoate and beta-alanine: step 1/1. Catalyzes the condensation of pantoate with beta-alanine in an ATP-dependent reaction via a pantoyl-adenylate intermediate. In Thioalkalivibrio sulfidiphilus (strain HL-EbGR7), this protein is Pantothenate synthetase.